We begin with the raw amino-acid sequence, 728 residues long: Catalase-peroxidase (728 aa).

Positions 1–26 (MDNPTDTAGKCPVAHGNKPRGPSNRD) are disordered. A cross-link (tryptophyl-tyrosyl-methioninium (Trp-Tyr) (with M-244)) is located at residues 96–218 (WHSAGTYRIT…LGAVQMGLIY (123 aa)). The active-site Proton acceptor is H97. The tryptophyl-tyrosyl-methioninium (Tyr-Met) (with W-96) cross-link spans 218–244 (YVNPEGPNGNPDPVAAARDIRETFARM). H259 contacts heme b.

It belongs to the peroxidase family. Peroxidase/catalase subfamily. Homodimer or homotetramer. Heme b is required as a cofactor. Post-translationally, formation of the three residue Trp-Tyr-Met cross-link is important for the catalase, but not the peroxidase activity of the enzyme.

It catalyses the reaction H2O2 + AH2 = A + 2 H2O. It carries out the reaction 2 H2O2 = O2 + 2 H2O. Its function is as follows. Bifunctional enzyme with both catalase and broad-spectrum peroxidase activity. Important for stationary phase survival. The sequence is that of Catalase-peroxidase from Rhizobium etli (strain ATCC 51251 / DSM 11541 / JCM 21823 / NBRC 15573 / CFN 42).